A 264-amino-acid polypeptide reads, in one-letter code: Hydroxyethylthiazole kinase (264 aa).

Residue Met52 coordinates substrate. Positions 127 and 173 each coordinate ATP. Gly200 serves as a coordination point for substrate.

Belongs to the Thz kinase family. It depends on Mg(2+) as a cofactor.

It carries out the reaction 5-(2-hydroxyethyl)-4-methylthiazole + ATP = 4-methyl-5-(2-phosphooxyethyl)-thiazole + ADP + H(+). The protein operates within cofactor biosynthesis; thiamine diphosphate biosynthesis; 4-methyl-5-(2-phosphoethyl)-thiazole from 5-(2-hydroxyethyl)-4-methylthiazole: step 1/1. In terms of biological role, catalyzes the phosphorylation of the hydroxyl group of 4-methyl-5-beta-hydroxyethylthiazole (THZ). The protein is Hydroxyethylthiazole kinase of Pectobacterium atrosepticum (strain SCRI 1043 / ATCC BAA-672) (Erwinia carotovora subsp. atroseptica).